Reading from the N-terminus, the 287-residue chain is 3-methyl-2-oxobutanoate hydroxymethyltransferase (287 aa).

Residues 1-19 (MSTLPKTLTLDTSTSRANP) are compositionally biased toward polar residues. Positions 1-24 (MSTLPKTLTLDTSTSRANPTPQPM) are disordered. Mg(2+)-binding residues include Asp66 and Asp105. 3-methyl-2-oxobutanoate is bound by residues 66–67 (DS), Asp105, and Lys135. Glu137 lines the Mg(2+) pocket. Catalysis depends on Glu204, which acts as the Proton acceptor.

The protein belongs to the PanB family. In terms of assembly, homodecamer; pentamer of dimers. Mg(2+) is required as a cofactor.

It is found in the cytoplasm. The catalysed reaction is 3-methyl-2-oxobutanoate + (6R)-5,10-methylene-5,6,7,8-tetrahydrofolate + H2O = 2-dehydropantoate + (6S)-5,6,7,8-tetrahydrofolate. Its pathway is cofactor biosynthesis; (R)-pantothenate biosynthesis; (R)-pantoate from 3-methyl-2-oxobutanoate: step 1/2. In terms of biological role, catalyzes the reversible reaction in which hydroxymethyl group from 5,10-methylenetetrahydrofolate is transferred onto alpha-ketoisovalerate to form ketopantoate. The protein is 3-methyl-2-oxobutanoate hydroxymethyltransferase of Sphingopyxis alaskensis (strain DSM 13593 / LMG 18877 / RB2256) (Sphingomonas alaskensis).